The sequence spans 108 residues: Thioredoxin (108 aa).

The 107-residue stretch at 2–108 folds into the Thioredoxin domain; sequence SDAILYVSDD…QLTAFLDSQL (107 aa). A disulfide bond links Cys-33 and Cys-36.

The protein belongs to the thioredoxin family.

Component of the thioredoxin-thioredoxin reductase system. Participates in various redox reactions through the reversible oxidation of its active center dithiol to a disulfide and catalyzes dithiol-disulfide exchange reactions. This chain is Thioredoxin (trxA), found in Acidithiobacillus ferridurans.